Here is a 328-residue protein sequence, read N- to C-terminus: WUSCHEL-related homeobox 6 (328 aa).

Polar residues predominate over residues 1–11 (MEGSSNSPDRQ). Residues 1–45 (MEGSSNSPDRQSSGGSPPEERGGGGSGGGGGRSAAGEPVRSRWTP) are disordered. The segment covering 23 to 33 (GGGSGGGGGRS) has biased composition (gly residues). Residues 38–102 (PVRSRWTPKP…NRRSRSRRRQ (65 aa)) constitute a DNA-binding region (homeobox; WUS-type).

Belongs to the WUS homeobox family.

It is found in the nucleus. Transcription factor which may be involved in developmental processes. The protein is WUSCHEL-related homeobox 6 (WOX6) of Oryza sativa subsp. japonica (Rice).